We begin with the raw amino-acid sequence, 186 residues long: Ribosome-recycling factor (186 aa).

This sequence belongs to the RRF family.

The protein localises to the cytoplasm. Its function is as follows. Responsible for the release of ribosomes from messenger RNA at the termination of protein biosynthesis. May increase the efficiency of translation by recycling ribosomes from one round of translation to another. This Ralstonia nicotianae (strain ATCC BAA-1114 / GMI1000) (Ralstonia solanacearum) protein is Ribosome-recycling factor.